Here is a 290-residue protein sequence, read N- to C-terminus: ATP synthase gamma chain (290 aa).

Belongs to the ATPase gamma chain family. F-type ATPases have 2 components, CF(1) - the catalytic core - and CF(0) - the membrane proton channel. CF(1) has five subunits: alpha(3), beta(3), gamma(1), delta(1), epsilon(1). CF(0) has three main subunits: a, b and c.

Its subcellular location is the cell inner membrane. Functionally, produces ATP from ADP in the presence of a proton gradient across the membrane. The gamma chain is believed to be important in regulating ATPase activity and the flow of protons through the CF(0) complex. In Desulfotalea psychrophila (strain LSv54 / DSM 12343), this protein is ATP synthase gamma chain.